Here is a 553-residue protein sequence, read N- to C-terminus: Dihydrolipoyllysine-residue acetyltransferase component of pyruvate dehydrogenase complex (553 aa).

Positions 2–77 constitute a Lipoyl-binding 1 domain; that stretch reads AFSVQMPALG…EVGGELAVIG (76 aa). Lysine 43 is modified (N6-lipoyllysine). Residues 81 to 125 form a disordered region; it reads DAGEAAAPAPEKVPAAQPESKPAPEPPPVQPTSGAPAGGDAKPVL. The span at 84–100 shows a compositional bias: low complexity; sequence EAAAPAPEKVPAAQPES. Over residues 101 to 110 the composition is skewed to pro residues; sequence KPAPEPPPVQ. The Lipoyl-binding 2 domain maps to 121 to 196; it reads AKPVLMPELG…PVGGELARIG (76 aa). The residue at position 162 (lysine 162) is an N6-lipoyllysine. 2 disordered regions span residues 204–238 and 278–321; these read APAP…AGAA and AAAE…TQKA. The segment covering 206–232 has biased composition (pro residues); sequence APKPAPKPVPEPAPTPKAEPAPSPPAA. The region spanning 243 to 280 is the Peripheral subunit-binding (PSBD) domain; sequence YVTPLVRKLASENNIDLAGVTGTGVGGRIRKQDVLAAA. Residues 288–300 are compositionally biased toward low complexity; the sequence is APAPAAQAAAAPA. Active-site residues include histidine 523 and aspartate 527.

It belongs to the 2-oxoacid dehydrogenase family. Forms a 24-polypeptide structural core with octahedral symmetry. Part of the PDH complex, consisting of multiple copies of AceE (E1), DlaT (E2) and Lpd (E3). Requires (R)-lipoate as cofactor.

It catalyses the reaction N(6)-[(R)-dihydrolipoyl]-L-lysyl-[protein] + acetyl-CoA = N(6)-[(R)-S(8)-acetyldihydrolipoyl]-L-lysyl-[protein] + CoA. Functionally, component of the pyruvate dehydrogenase (PDH) complex, that catalyzes the overall conversion of pyruvate to acetyl-CoA and CO(2). This chain is Dihydrolipoyllysine-residue acetyltransferase component of pyruvate dehydrogenase complex (dlaT), found in Mycobacterium bovis (strain ATCC BAA-935 / AF2122/97).